The following is a 436-amino-acid chain: Xylose isomerase (436 aa).

Asp-306 and Asp-308 together coordinate Mg(2+).

It belongs to the xylose isomerase family. Homotetramer. The cofactor is Mg(2+).

The protein resides in the cytoplasm. It catalyses the reaction alpha-D-xylose = alpha-D-xylulofuranose. The protein is Xylose isomerase of Sinorhizobium fredii (strain NBRC 101917 / NGR234).